The following is a 455-amino-acid chain: Secreted triacylglycerol lipase LIP4 (455 aa).

The first 19 residues, 1 to 19 (MKLNLFILGLLTLAAHAYA), serve as a signal peptide directing secretion. A glycan (N-linked (GlcNAc...) asparagine) is linked at asparagine 98. Cysteine 115 and cysteine 284 are oxidised to a cystine. Serine 197 serves as the catalytic Nucleophile. The N-linked (GlcNAc...) asparagine glycan is linked to asparagine 230. Residues aspartate 344 and histidine 378 contribute to the active site. Cysteine 360 and cysteine 406 form a disulfide bridge.

Belongs to the AB hydrolase superfamily. Lipase family. Class Lip subfamily.

It localises to the secreted. The protein localises to the cell wall. It carries out the reaction a triacylglycerol + H2O = a diacylglycerol + a fatty acid + H(+). The enzyme catalyses a monoacylglycerol + H2O = glycerol + a fatty acid + H(+). It catalyses the reaction a diacylglycerol + H2O = a monoacylglycerol + a fatty acid + H(+). Its function is as follows. Secreted lipase involved in Dandruff and seborrheic dermatitis (D/SD) probably via lipase-mediated breakdown of sebaceous lipids and release of irritating free fatty acids. Has triacylglycerol lipase activity and is able to hydrolyze triolein. Mostly converts monoolein to di- and triolein, while free fatty acids are only produced in low amounts. This chain is Secreted triacylglycerol lipase LIP4, found in Malassezia globosa (strain ATCC MYA-4612 / CBS 7966) (Dandruff-associated fungus).